The sequence spans 45 residues: Large ribosomal subunit protein bL36 (45 aa).

This sequence belongs to the bacterial ribosomal protein bL36 family.

The protein is Large ribosomal subunit protein bL36 of Aliivibrio salmonicida (strain LFI1238) (Vibrio salmonicida (strain LFI1238)).